A 227-amino-acid chain; its full sequence is PKHD-type hydroxylase Bamb_4479 (227 aa).

One can recognise a Fe2OG dioxygenase domain in the interval 80 to 179 (QVYPPLFNRY…RVASFFWVQS (100 aa)). Residues His-98, Asp-100, and His-160 each contribute to the Fe cation site. Residue Arg-170 coordinates 2-oxoglutarate.

Fe(2+) serves as cofactor. L-ascorbate is required as a cofactor.

The sequence is that of PKHD-type hydroxylase Bamb_4479 from Burkholderia ambifaria (strain ATCC BAA-244 / DSM 16087 / CCUG 44356 / LMG 19182 / AMMD) (Burkholderia cepacia (strain AMMD)).